Here is a 60-residue protein sequence, read N- to C-terminus: Large ribosomal subunit protein bL32 (60 aa).

Basic residues predominate over residues 1 to 23; that stretch reads MAKHPVPKKKTSKARRDARRSHH. The segment at 1–28 is disordered; it reads MAKHPVPKKKTSKARRDARRSHHALTPP.

Belongs to the bacterial ribosomal protein bL32 family. As to quaternary structure, part of the 50S ribosomal subunit.

Found on the solvent side of the large subunit. In Thermus thermophilus (strain ATCC BAA-163 / DSM 7039 / HB27), this protein is Large ribosomal subunit protein bL32 (rpmF).